The primary structure comprises 182 residues: R-phycoerythrin subunit beta (182 aa).

(2R,3E)-phycoerythrobilin is bound at residue cysteine 82.

Belongs to the phycobiliprotein family. In terms of assembly, homodimer. Contains one covalently linked phycoerythrobilin chromophore.

In terms of biological role, green-light absorbing phycoerythrin of unknown function. This chain is R-phycoerythrin subunit beta (cpeB), found in Prochlorococcus marinus (strain SARG / CCMP1375 / SS120).